A 331-amino-acid polypeptide reads, in one-letter code: Adenosine deaminase (331 aa).

2 residues coordinate Zn(2+): histidine 12 and histidine 14. 3 residues coordinate substrate: histidine 14, aspartate 16, and glycine 170. A Zn(2+)-binding site is contributed by histidine 197. Residue glutamate 200 is the Proton donor of the active site. Aspartate 278 contacts Zn(2+). Aspartate 279 contacts substrate.

Belongs to the metallo-dependent hydrolases superfamily. Adenosine and AMP deaminases family. Adenosine deaminase subfamily. Zn(2+) is required as a cofactor.

The catalysed reaction is adenosine + H2O + H(+) = inosine + NH4(+). It carries out the reaction 2'-deoxyadenosine + H2O + H(+) = 2'-deoxyinosine + NH4(+). In terms of biological role, catalyzes the hydrolytic deamination of adenosine and 2-deoxyadenosine. The protein is Adenosine deaminase of Shewanella loihica (strain ATCC BAA-1088 / PV-4).